The following is a 107-amino-acid chain: Large ribosomal subunit protein mL55 (107 aa).

The transit peptide at 1–16 directs the protein to the mitochondrion; the sequence is MLLKQLPQAVQQIRCI.

The protein belongs to the mitochondrion-specific ribosomal protein mL55 family. In terms of assembly, component of the mitochondrial ribosome large subunit (39S) which comprises a 16S rRNA and about 50 distinct proteins. In terms of tissue distribution, ubiquitously expressed (at protein level).

It is found in the mitochondrion. Its function is as follows. Involved in mitochondrial biogenesis and G2/M phase cell cycle progression. In Drosophila melanogaster (Fruit fly), this protein is Large ribosomal subunit protein mL55 (mRpL55).